Reading from the N-terminus, the 67-residue chain is Type 3 secretion system chaperone PscE (67 aa).

Positions 16–37 form a coiled coil; it reads HAAALRQRLQAALAECRRELAR.

Belongs to the YscE family. Forms a stable ternary complex with PscF/SctF and PscG within the cytoplasm. Co-stabilized by PscG.

The protein resides in the cytoplasm. Chaperone of the type III secretion system (T3SS), also called injectisome, which is used to inject bacterial effector proteins into eukaryotic host cells, facilitating the establishment and dissemination of infection. Along with PscG, prevents premature polymerization of the PscF/SctF needle protein within the cytoplasm. Required for type III secretion needle assembly. Also required for cytotoxicity by influencing PscF/SctF levels. In Pseudomonas aeruginosa (strain ATCC 15692 / DSM 22644 / CIP 104116 / JCM 14847 / LMG 12228 / 1C / PRS 101 / PAO1), this protein is Type 3 secretion system chaperone PscE (pscE).